The primary structure comprises 586 residues: Glutathione S-transferase C-terminal domain-containing protein homolog (586 aa).

Residues leucine 121–leucine 276 enclose the GST C-terminal domain.

It belongs to the GSTCD family.

The protein is Glutathione S-transferase C-terminal domain-containing protein homolog of Drosophila pseudoobscura pseudoobscura (Fruit fly).